A 129-amino-acid chain; its full sequence is UPF0225 protein XC_4246 (129 aa).

Belongs to the UPF0225 family.

This Xanthomonas campestris pv. campestris (strain 8004) protein is UPF0225 protein XC_4246.